A 360-amino-acid polypeptide reads, in one-letter code: DNA polymerase IV (360 aa).

Positions 8–191 constitute a UmuC domain; sequence VLHVDMDSFF…LPVGRIPGIG (184 aa). Mg(2+) is bound by residues Asp-12 and Asp-110. The active site involves Glu-111.

The protein belongs to the DNA polymerase type-Y family. As to quaternary structure, monomer. Mg(2+) is required as a cofactor.

It localises to the cytoplasm. The enzyme catalyses DNA(n) + a 2'-deoxyribonucleoside 5'-triphosphate = DNA(n+1) + diphosphate. Functionally, poorly processive, error-prone DNA polymerase involved in untargeted mutagenesis. Copies undamaged DNA at stalled replication forks, which arise in vivo from mismatched or misaligned primer ends. These misaligned primers can be extended by PolIV. Exhibits no 3'-5' exonuclease (proofreading) activity. May be involved in translesional synthesis. This Methanoculleus marisnigri (strain ATCC 35101 / DSM 1498 / JR1) protein is DNA polymerase IV.